The sequence spans 317 residues: Acetyl-coenzyme A carboxylase carboxyl transferase subunit alpha (317 aa).

In terms of domain architecture, CoA carboxyltransferase C-terminal spans 40-293 (LEKRSADALK…GDIIAASLRS (254 aa)).

The protein belongs to the AccA family. As to quaternary structure, acetyl-CoA carboxylase is a heterohexamer composed of biotin carboxyl carrier protein (AccB), biotin carboxylase (AccC) and two subunits each of ACCase subunit alpha (AccA) and ACCase subunit beta (AccD).

It is found in the cytoplasm. It carries out the reaction N(6)-carboxybiotinyl-L-lysyl-[protein] + acetyl-CoA = N(6)-biotinyl-L-lysyl-[protein] + malonyl-CoA. It participates in lipid metabolism; malonyl-CoA biosynthesis; malonyl-CoA from acetyl-CoA: step 1/1. Component of the acetyl coenzyme A carboxylase (ACC) complex. First, biotin carboxylase catalyzes the carboxylation of biotin on its carrier protein (BCCP) and then the CO(2) group is transferred by the carboxyltransferase to acetyl-CoA to form malonyl-CoA. The sequence is that of Acetyl-coenzyme A carboxylase carboxyl transferase subunit alpha from Brucella melitensis biotype 2 (strain ATCC 23457).